Consider the following 372-residue polypeptide: MSLRCGDAARTLGPRVFGRYFCSPVRPLSSLPDKKKELLQNGPDLQDFVSGDLADRSTWDEYKGNLKRQKGERLRLPPWLKTEIPMGKNYNKLKNTLRNLNLHTVCEEARCPNIGECWGGGEYATATATIMLMGDTCTRGCRFCSVKTARNPPPLDASEPYNTAKAIAEWGLDYVVLTSVDRDDMPDGGAEHIAKTVSYLKERNPKILVECLTPDFRGDLKAIEKVALSGLDVYAHNVETVPELQSKVRDPRANFDQSLRVLKHAKKVQPDVISKTSIMLGLGENDEQVYATMKALREADVDCLTLGQYMQPTRRHLKVEEYITPEKFKYWEKVGNELGFHYTASGPLVRSSYKAGEFFLKNLVAKRKTKDL.

The transit peptide at methionine 1 to proline 27 directs the protein to the mitochondrion. Residues cysteine 106, cysteine 111, cysteine 117, cysteine 137, cysteine 141, cysteine 144, and serine 352 each coordinate [4Fe-4S] cluster. In terms of domain architecture, Radical SAM core spans glutamate 122–histidine 341.

It belongs to the radical SAM superfamily. Lipoyl synthase family. [4Fe-4S] cluster is required as a cofactor.

It localises to the mitochondrion. The catalysed reaction is [[Fe-S] cluster scaffold protein carrying a second [4Fe-4S](2+) cluster] + N(6)-octanoyl-L-lysyl-[protein] + 2 oxidized [2Fe-2S]-[ferredoxin] + 2 S-adenosyl-L-methionine + 4 H(+) = [[Fe-S] cluster scaffold protein] + N(6)-[(R)-dihydrolipoyl]-L-lysyl-[protein] + 4 Fe(3+) + 2 hydrogen sulfide + 2 5'-deoxyadenosine + 2 L-methionine + 2 reduced [2Fe-2S]-[ferredoxin]. Its pathway is protein modification; protein lipoylation via endogenous pathway; protein N(6)-(lipoyl)lysine from octanoyl-[acyl-carrier-protein]: step 2/2. In terms of biological role, catalyzes the radical-mediated insertion of two sulfur atoms into the C-6 and C-8 positions of the octanoyl moiety bound to the lipoyl domains of lipoate-dependent enzymes, thereby converting the octanoylated domains into lipoylated derivatives. The sequence is that of Lipoyl synthase, mitochondrial from Homo sapiens (Human).